The following is a 111-amino-acid chain: MKHLAAYLLLALAGNTSPSSEDVKAVLSSVGIDADEERLNKLIAELEGKDLQELIAEGSTKLASVPSGGAAAAAPAAAGAAAGGAAAPAAEEKKEEEKEESDEDMGFGLFD.

Residues 81-111 (AAGGAAAPAAEEKKEEEKEESDEDMGFGLFD) are disordered. Ser-101 carries the post-translational modification Phosphoserine.

This sequence belongs to the eukaryotic ribosomal protein P1/P2 family. As to quaternary structure, P1 and P2 exist as dimers at the large ribosomal subunit.

Plays an important role in the elongation step of protein synthesis. The chain is Large ribosomal subunit protein P2 from Aspergillus fumigatus (strain ATCC MYA-4609 / CBS 101355 / FGSC A1100 / Af293) (Neosartorya fumigata).